The primary structure comprises 334 residues: MKETIAYLGMGMWGFSLANLLANNGHRVVGWARNPALIEQLSVQRRHPAAPHISIPQNLSFTSHMEEALDGATMIVEGVTSAGMRPVLTQLKALTELRVPLVITSKGIEQNTGLLLSEIALEIFGRPAAQHLGYLSGPSIASEVLRGCPCSVVISAYNPDTLKQIHRAFLTPTFRVYPNSDLKGVALGGALKNVIAIACGISDGFRFGDNAKSGLVTRGLHEIRKFATIMGCRPDTLNGLAGLGDLCTTSFSAFSRNTLFGKLLAEGLTPEQAKTKIGMVVEGVYTALSAHQIATHHRIDMPITTSVYRVLYENLDIQEGIAQLLQRDTKEEYL.

3 residues coordinate NADPH: Trp-13, Arg-33, and Lys-106. Sn-glycerol 3-phosphate is bound by residues Lys-106, Gly-137, and Ser-139. Ala-141 contributes to the NADPH binding site. Sn-glycerol 3-phosphate contacts are provided by Lys-192, Asp-245, Ser-255, Arg-256, and Asn-257. Lys-192 (proton acceptor) is an active-site residue. Position 256 (Arg-256) interacts with NADPH. Val-280 and Glu-282 together coordinate NADPH.

This sequence belongs to the NAD-dependent glycerol-3-phosphate dehydrogenase family.

Its subcellular location is the cytoplasm. It carries out the reaction sn-glycerol 3-phosphate + NAD(+) = dihydroxyacetone phosphate + NADH + H(+). The enzyme catalyses sn-glycerol 3-phosphate + NADP(+) = dihydroxyacetone phosphate + NADPH + H(+). It participates in membrane lipid metabolism; glycerophospholipid metabolism. In terms of biological role, catalyzes the reduction of the glycolytic intermediate dihydroxyacetone phosphate (DHAP) to sn-glycerol 3-phosphate (G3P), the key precursor for phospholipid synthesis. The polypeptide is Glycerol-3-phosphate dehydrogenase [NAD(P)+] (Chlamydia trachomatis serovar A (strain ATCC VR-571B / DSM 19440 / HAR-13)).